Here is a 301-residue protein sequence, read N- to C-terminus: MTAKTLIVLIGPTGVGKTELSLRIAEYFKTSIISSDSRQLYAELKIGTAAPTPEQLKRVPHYFVGTLQLTDYYSAAQYETEVMSVLEQLFQQHHVVLLTGGSMMYVDAICKGIDDIPTVDAETRELLLHKYDTEGLDNLCAELKLLDPEYYKIVDLKNPKRVIHALEICYMTGKTYTSFRTQQKKERPFHILKIGLTRDRAELYDRINRRVDQMMNEGLLEEARSVYAHRELNSLNTVGYKEIFKYLDGEWDLDFAIEKIKQNSRIYSRKQMTWFKRDEEIRWFHPEQEKEILSYLQASIK.

11–18 (GPTGVGKT) is an ATP binding site. 13–18 (TGVGKT) provides a ligand contact to substrate. The tract at residues 36 to 39 (DSRQ) is interaction with substrate tRNA.

The protein belongs to the IPP transferase family. Monomer. It depends on Mg(2+) as a cofactor.

The catalysed reaction is adenosine(37) in tRNA + dimethylallyl diphosphate = N(6)-dimethylallyladenosine(37) in tRNA + diphosphate. In terms of biological role, catalyzes the transfer of a dimethylallyl group onto the adenine at position 37 in tRNAs that read codons beginning with uridine, leading to the formation of N6-(dimethylallyl)adenosine (i(6)A). The protein is tRNA dimethylallyltransferase 1 of Bacteroides fragilis (strain YCH46).